A 90-amino-acid polypeptide reads, in one-letter code: MAVKIRLKRMGSKRNPFYRIVVADSRSPRDGRSIEQIGTYNPVVNPVEVKIDEEKALDWMSKGAKPSDTVRNLFSNEGIMKKFHEQKNSK.

It belongs to the bacterial ribosomal protein bS16 family.

The chain is Small ribosomal subunit protein bS16 from Oceanobacillus iheyensis (strain DSM 14371 / CIP 107618 / JCM 11309 / KCTC 3954 / HTE831).